The sequence spans 123 residues: Fluoride-specific ion channel FluC (123 aa).

Helical transmembrane passes span Ile-3 to Ala-23, Trp-34 to Phe-54, Leu-67 to Leu-87, and Leu-99 to Val-119. The Na(+) site is built by Gly-74 and Thr-77.

The protein belongs to the fluoride channel Fluc/FEX (TC 1.A.43) family.

It is found in the cell inner membrane. It catalyses the reaction fluoride(in) = fluoride(out). Na(+) is not transported, but it plays an essential structural role and its presence is essential for fluoride channel function. Its function is as follows. Fluoride-specific ion channel. Important for reducing fluoride concentration in the cell, thus reducing its toxicity. This chain is Fluoride-specific ion channel FluC, found in Magnetococcus marinus (strain ATCC BAA-1437 / JCM 17883 / MC-1).